A 434-amino-acid chain; its full sequence is Maltoporin (434 aa).

The N-terminal stretch at 1–25 is a signal peptide; the sequence is MKMKAKWLPIAAAVTAALASQAAFA.

It belongs to the porin LamB (TC 1.B.3) family. Homotrimer formed of three 18-stranded antiparallel beta-barrels, containing three independent channels.

It localises to the cell outer membrane. It catalyses the reaction beta-maltose(in) = beta-maltose(out). Involved in the transport of maltose and maltodextrins. In Aeromonas hydrophila, this protein is Maltoporin.